A 453-amino-acid polypeptide reads, in one-letter code: Serine incorporator 1 (453 aa).

A lipid anchor (N-myristoyl glycine) is attached at glycine 2. Residues 2-39 are Cytoplasmic-facing; sequence GSVLGLCSMASWIPCLCGSAPCLLCRCCPSGNNSTVTR. Residues 40 to 60 traverse the membrane as a helical segment; that stretch reads LIYALFLLVGVCVACVMLIPG. The Lumenal portion of the chain corresponds to 61 to 88; the sequence is MEEQLNKIPGFCENEKGVVPCNILVGYK. Residues 89–109 form a helical membrane-spanning segment; the sequence is AVYRLCFGLAMFYLLLSLLMI. The Cytoplasmic portion of the chain corresponds to 110–123; that stretch reads KVKSSSDPRAAVHN. Residues 124-144 form a helical membrane-spanning segment; it reads GFWFFKFAAAIAIIIGAFFIP. Residues 145–151 are Lumenal-facing; the sequence is EGTFTTV. Residues 152–172 traverse the membrane as a helical segment; that stretch reads WFYVGMAGAFCFILIQLVLLI. The Cytoplasmic portion of the chain corresponds to 173–197; the sequence is DFAHSWNESWVEKMEEGNSRCWYAA. The helical transmembrane segment at 198–218 threads the bilayer; the sequence is LLSATALNYLLSLVAIVLFFV. The Lumenal portion of the chain corresponds to 219–231; sequence YYTHPASCSENKA. The helical transmembrane segment at 232–252 threads the bilayer; it reads FISVNMLLCIGASVMSILPKI. The Cytoplasmic portion of the chain corresponds to 253–259; the sequence is QESQPRS. A helical transmembrane segment spans residues 260-280; it reads GLLQSSVITVYTMYLTWSAMT. The Lumenal segment spans residues 281 to 309; that stretch reads NEPETNCNPSLLSIIGYNTTSTVPKEGQS. The helical transmembrane segment at 310–330 threads the bilayer; it reads VQWWHAQGIIGLILFLLCVFY. Residues 331–387 are Cytoplasmic-facing; sequence SSIRTSNNSQVNKLTLTSDESTLIEDGGARSDGSLEDGDDVHRAVDNERDGVTYSYS. Serine 351 is modified (phosphoserine). Threonine 352 is subject to Phosphothreonine. Phosphoserine is present on residues serine 361 and serine 364. The helical transmembrane segment at 388 to 408 threads the bilayer; that stretch reads FFHFMLFLASLYIMMTLTNWY. Residues 409–426 lie on the Lumenal side of the membrane; sequence RYEPSREMKSQWTAVWVK. The helical transmembrane segment at 427-447 threads the bilayer; sequence ISSSWIGIVLYVWTLVAPLVL. Over 448–453 the chain is Cytoplasmic; that stretch reads TNRDFD.

The protein belongs to the TDE1 family. In terms of assembly, interacts with SPTLC1.

The protein localises to the endoplasmic reticulum membrane. In terms of biological role, enhances the incorporation of serine into phosphatidylserine and sphingolipids. The sequence is that of Serine incorporator 1 (SERINC1) from Pongo abelii (Sumatran orangutan).